Consider the following 155-residue polypeptide: NADPH-dependent 7-cyano-7-deazaguanine reductase (155 aa).

The active-site Thioimide intermediate is the C53. Catalysis depends on D60, which acts as the Proton donor. Residues 75–77 and 94–95 each bind substrate; these read VES and HE.

This sequence belongs to the GTP cyclohydrolase I family. QueF type 1 subfamily.

The protein localises to the cytoplasm. The enzyme catalyses 7-aminomethyl-7-carbaguanine + 2 NADP(+) = 7-cyano-7-deazaguanine + 2 NADPH + 3 H(+). It functions in the pathway tRNA modification; tRNA-queuosine biosynthesis. Catalyzes the NADPH-dependent reduction of 7-cyano-7-deazaguanine (preQ0) to 7-aminomethyl-7-deazaguanine (preQ1). This Ruegeria pomeroyi (strain ATCC 700808 / DSM 15171 / DSS-3) (Silicibacter pomeroyi) protein is NADPH-dependent 7-cyano-7-deazaguanine reductase.